A 284-amino-acid polypeptide reads, in one-letter code: Tryptophan 2,3-dioxygenase (284 aa).

Residues 53-57 (FIVQH), Tyr-115, and Arg-119 contribute to the substrate site. Residue His-242 participates in heme binding. Residue Thr-256 participates in substrate binding.

The protein belongs to the tryptophan 2,3-dioxygenase family. As to quaternary structure, homotetramer. Heme serves as cofactor.

The enzyme catalyses L-tryptophan + O2 = N-formyl-L-kynurenine. Its pathway is amino-acid degradation; L-tryptophan degradation via kynurenine pathway; L-kynurenine from L-tryptophan: step 1/2. Heme-dependent dioxygenase that catalyzes the oxidative cleavage of the L-tryptophan (L-Trp) pyrrole ring and converts L-tryptophan to N-formyl-L-kynurenine. Catalyzes the oxidative cleavage of the indole moiety. This is Tryptophan 2,3-dioxygenase from Bordetella pertussis (strain Tohama I / ATCC BAA-589 / NCTC 13251).